Here is a 449-residue protein sequence, read N- to C-terminus: Phosphoglucosamine mutase (449 aa).

The Phosphoserine intermediate role is filled by Ser-99. Residues Ser-99, Asp-239, Asp-241, and Asp-243 each coordinate Mg(2+). Residue Ser-99 is modified to Phosphoserine.

Belongs to the phosphohexose mutase family. The cofactor is Mg(2+). In terms of processing, activated by phosphorylation.

It catalyses the reaction alpha-D-glucosamine 1-phosphate = D-glucosamine 6-phosphate. Functionally, catalyzes the conversion of glucosamine-6-phosphate to glucosamine-1-phosphate. In Finegoldia magna (strain ATCC 29328 / DSM 20472 / WAL 2508) (Peptostreptococcus magnus), this protein is Phosphoglucosamine mutase.